We begin with the raw amino-acid sequence, 154 residues long: Ecotin-like protein 2 (154 aa).

Belongs to the protease inhibitor I11 (ecotin) family.

The sequence is that of Ecotin-like protein 2 from Trypanosoma brucei brucei (strain 927/4 GUTat10.1).